A 552-amino-acid chain; its full sequence is MTKYVFVTGGVVSSLGKGIAAASLAAILESRGLKVTLLKLDPYINVDPGTMSPFQHGEVFVTEDGAETDLDLGHYERFISTKMRKANNFTTGQIYESVIRKERRGDYLGKTVQVIPHITNEIQAFIERGAASATCGEPDVAIVEIGGTVGDIESLPFLEAARQMSLRLGRNSACFVHLTLVPYVATAGELKTKPTQHSVQKLREIGILPHVLLCRADRRIPDDESKKISMFSNVPEDAVISVWDADSIYKIPQMLHDQGLDRIICEELKLSPKDADLSMWSALVEKLENPKQEVTIGMVGKYVDLTESYKSLIEALRHASIHTSTKVNIEYIDSEELETNGVDSLKHLDAVLVPGGFGRRGTEGKIAAVRYARESKVPYLGICLGMQLAVIEFARDVVGLKQANSTEFDPDTPERVVALITEWYDREGKVETRTEESDLGGTMRLGSQRCPIKPGTMAEEIYGKDVNERHRHRYEVNNRFVPQLEAGGLIISARTPSEDLPEMMELPRSMHPWFVGVQFHPEFTSTPRDGHPLFRSFVEAALANKQARGVQA.

The interval 1–270 (MTKYVFVTGG…DRIICEELKL (270 aa)) is amidoligase domain. Serine 13 provides a ligand contact to CTP. Serine 13 contributes to the UTP binding site. Residues 14-19 (SLGKGI) and aspartate 71 each bind ATP. Mg(2+)-binding residues include aspartate 71 and glutamate 144. Residues 151–153 (DIE), 191–196 (KTKPTQ), and lysine 227 each bind CTP. UTP is bound by residues 191–196 (KTKPTQ) and lysine 227. Residues 295-547 (TIGMVGKYVD…VEAALANKQA (253 aa)) enclose the Glutamine amidotransferase type-1 domain. Glycine 356 is a binding site for L-glutamine. The active-site Nucleophile; for glutamine hydrolysis is cysteine 383. L-glutamine contacts are provided by residues 384-387 (LGMQ), glutamate 407, and arginine 473. Catalysis depends on residues histidine 520 and glutamate 522.

It belongs to the CTP synthase family. In terms of assembly, homotetramer.

The catalysed reaction is UTP + L-glutamine + ATP + H2O = CTP + L-glutamate + ADP + phosphate + 2 H(+). It carries out the reaction L-glutamine + H2O = L-glutamate + NH4(+). It catalyses the reaction UTP + NH4(+) + ATP = CTP + ADP + phosphate + 2 H(+). Its pathway is pyrimidine metabolism; CTP biosynthesis via de novo pathway; CTP from UDP: step 2/2. With respect to regulation, allosterically activated by GTP, when glutamine is the substrate; GTP has no effect on the reaction when ammonia is the substrate. The allosteric effector GTP functions by stabilizing the protein conformation that binds the tetrahedral intermediate(s) formed during glutamine hydrolysis. Inhibited by the product CTP, via allosteric rather than competitive inhibition. Catalyzes the ATP-dependent amination of UTP to CTP with either L-glutamine or ammonia as the source of nitrogen. Regulates intracellular CTP levels through interactions with the four ribonucleotide triphosphates. The chain is CTP synthase from Burkholderia cenocepacia (strain HI2424).